Here is a 399-residue protein sequence, read N- to C-terminus: Protein translocase subunit SecD (399 aa).

The next 6 helical transmembrane spans lie at 7-27 (IKTA…LTFP), 239-259 (VIGA…LGLV), 262-282 (IALL…NATL), 286-306 (GVAG…LIFA), 329-351 (ALRA…FYFG), and 357-381 (GFAV…RTLL).

This sequence belongs to the SecD/SecF family. SecD subfamily. In terms of assembly, forms a complex with SecF. Part of the essential Sec protein translocation apparatus which comprises SecA, SecYEG and auxiliary proteins SecDF. Other proteins may also be involved.

It localises to the cell inner membrane. Its function is as follows. Part of the Sec protein translocase complex. Interacts with the SecYEG preprotein conducting channel. SecDF uses the proton motive force (PMF) to complete protein translocation after the ATP-dependent function of SecA. The polypeptide is Protein translocase subunit SecD (Dictyoglomus turgidum (strain DSM 6724 / Z-1310)).